We begin with the raw amino-acid sequence, 305 residues long: Ribonuclease Z (305 aa).

Histidine 61, histidine 63, aspartate 65, histidine 66, histidine 141, aspartate 209, and histidine 268 together coordinate Zn(2+). Catalysis depends on aspartate 65, which acts as the Proton acceptor.

This sequence belongs to the RNase Z family. In terms of assembly, homodimer. It depends on Zn(2+) as a cofactor.

The enzyme catalyses Endonucleolytic cleavage of RNA, removing extra 3' nucleotides from tRNA precursor, generating 3' termini of tRNAs. A 3'-hydroxy group is left at the tRNA terminus and a 5'-phosphoryl group is left at the trailer molecule.. In terms of biological role, zinc phosphodiesterase, which displays some tRNA 3'-processing endonuclease activity. Probably involved in tRNA maturation, by removing a 3'-trailer from precursor tRNA. The sequence is that of Ribonuclease Z from Clostridioides difficile (strain 630) (Peptoclostridium difficile).